Here is a 283-residue protein sequence, read N- to C-terminus: Thymidylate synthase (283 aa).

Arg22 is a dUMP binding site. Catalysis depends on Cys160, which acts as the Nucleophile. Residues 180–183 (RSCD), Asn191, and 221–223 (HIY) contribute to the dUMP site. (6R)-5,10-methylene-5,6,7,8-tetrahydrofolate is bound at residue Asp183. Ser282 is a binding site for (6R)-5,10-methylene-5,6,7,8-tetrahydrofolate.

It belongs to the thymidylate synthase family. Bacterial-type ThyA subfamily. As to quaternary structure, homodimer.

It localises to the cytoplasm. It carries out the reaction dUMP + (6R)-5,10-methylene-5,6,7,8-tetrahydrofolate = 7,8-dihydrofolate + dTMP. It participates in pyrimidine metabolism; dTTP biosynthesis. Its function is as follows. Catalyzes the reductive methylation of 2'-deoxyuridine-5'-monophosphate (dUMP) to 2'-deoxythymidine-5'-monophosphate (dTMP) while utilizing 5,10-methylenetetrahydrofolate (mTHF) as the methyl donor and reductant in the reaction, yielding dihydrofolate (DHF) as a by-product. This enzymatic reaction provides an intracellular de novo source of dTMP, an essential precursor for DNA biosynthesis. This Haemophilus influenzae (strain ATCC 51907 / DSM 11121 / KW20 / Rd) protein is Thymidylate synthase.